Reading from the N-terminus, the 852-residue chain is Serine/threonine-protein kinase pakB (852 aa).

The segment at 1 to 334 (MEQSKRVSMM…NVGNKQDEEK (334 aa)) is disordered. Ser-8 carries the post-translational modification Phosphoserine; by autocatalysis. Residues 24 to 35 (SPPPNRKPPPPN) are compositionally biased toward pro residues. Over residues 44 to 56 (SSLNSSGSSFVSP) the composition is skewed to low complexity. Residues 57-74 (SPSPSPSPQQPVKRPLPS) are compositionally biased toward pro residues. 2 stretches are compositionally biased toward low complexity: residues 90-117 (RPQQQQPEIPVRPTTPTRTPPNLINSNG) and 124-163 (FSSSSGNSGYSSSNNNNSNSNSSINMNGNHSNGLNGGSSN). The span at 181-191 (TPPPPPQPTPS) shows a compositional bias: pro residues. The span at 201 to 210 (ASHNNTQHNI) shows a compositional bias: polar residues. Low complexity-rich tracts occupy residues 246–270 (SPGSTSPSLGSSNGNIPISTTSTPI) and 293–317 (SNSNSNNNNNNNNNNNNNSSNATTS). In terms of domain architecture, CRIB spans 356-369 (VGSPFNVKHNIHVN). Positions 419–433 (AQQEQQALMQKQMQQ) are enriched in low complexity. Residues 419 to 526 (AQQEQQALMQ…GILSQQQEQQ (108 aa)) form a disordered region. The segment covering 470–485 (PQHHHQQQPPQQHHHQ) has biased composition (basic residues). Positions 486–514 (QQQQQHNNNNNNNNNNNNNNNNQQSAQQQ) are enriched in low complexity. Positions 570–823 (GEGSTKIGEG…AKVLLNHPFL (254 aa)) constitute a Protein kinase domain. ATP contacts are provided by residues 576–584 (IGEGAAGEV) and Lys-599. Residue Asp-691 is the Proton acceptor of the active site.

The protein belongs to the protein kinase superfamily. STE Ser/Thr protein kinase family. STE20 subfamily. Interacts with rac1A, rac1B, rac1C, racA, racB, racC and racF1. The cofactor is Mg(2+). Post-translationally, autophosphorylated at Ser-8. This may stimulate interaction with GTP-bound Rac family members which then further stimulates autophosphorylation and kinase activity.

It is found in the membrane. The protein localises to the cytoplasm. Its subcellular location is the cytoskeleton. The catalysed reaction is L-seryl-[protein] + ATP = O-phospho-L-seryl-[protein] + ADP + H(+). It carries out the reaction L-threonyl-[protein] + ATP = O-phospho-L-threonyl-[protein] + ADP + H(+). Regulator of the myosin I component of the cytoskeleton: required for regulation of cytokinesis, phagocytosis and pinocytosis. In Dictyostelium discoideum (Social amoeba), this protein is Serine/threonine-protein kinase pakB.